A 474-amino-acid chain; its full sequence is 3-isopropylmalate dehydratase large subunit (474 aa).

[4Fe-4S] cluster is bound by residues Cys-355, Cys-415, and Cys-418.

It belongs to the aconitase/IPM isomerase family. LeuC type 1 subfamily. In terms of assembly, heterodimer of LeuC and LeuD. [4Fe-4S] cluster is required as a cofactor.

It carries out the reaction (2R,3S)-3-isopropylmalate = (2S)-2-isopropylmalate. It functions in the pathway amino-acid biosynthesis; L-leucine biosynthesis; L-leucine from 3-methyl-2-oxobutanoate: step 2/4. Functionally, catalyzes the isomerization between 2-isopropylmalate and 3-isopropylmalate, via the formation of 2-isopropylmaleate. This chain is 3-isopropylmalate dehydratase large subunit, found in Shewanella sp. (strain ANA-3).